The primary structure comprises 197 residues: Ribonuclease HII (197 aa).

The region spanning 7-197 (LGIAGVDEVG…SFLRKLFATV (191 aa)) is the RNase H type-2 domain. Residues Asp-13, Glu-14, and Asp-109 each contribute to the a divalent metal cation site.

This sequence belongs to the RNase HII family. Requires Mn(2+) as cofactor. Mg(2+) serves as cofactor.

The protein localises to the cytoplasm. It catalyses the reaction Endonucleolytic cleavage to 5'-phosphomonoester.. In terms of biological role, endonuclease that specifically degrades the RNA of RNA-DNA hybrids. This is Ribonuclease HII from Synechococcus sp. (strain CC9311).